We begin with the raw amino-acid sequence, 347 residues long: tRNA N6-adenosine threonylcarbamoyltransferase (347 aa).

His-111 and His-115 together coordinate Fe cation. Residues 134–138 (LVSGG), Asp-167, Gly-180, and Asn-277 each bind substrate. Asp-305 contacts Fe cation.

The protein belongs to the KAE1 / TsaD family. It depends on Fe(2+) as a cofactor.

Its subcellular location is the cytoplasm. The enzyme catalyses L-threonylcarbamoyladenylate + adenosine(37) in tRNA = N(6)-L-threonylcarbamoyladenosine(37) in tRNA + AMP + H(+). Required for the formation of a threonylcarbamoyl group on adenosine at position 37 (t(6)A37) in tRNAs that read codons beginning with adenine. Is involved in the transfer of the threonylcarbamoyl moiety of threonylcarbamoyl-AMP (TC-AMP) to the N6 group of A37, together with TsaE and TsaB. TsaD likely plays a direct catalytic role in this reaction. The sequence is that of tRNA N6-adenosine threonylcarbamoyltransferase from Ralstonia pickettii (strain 12J).